The chain runs to 512 residues: Sucrose transport protein SUC5 (512 aa).

A disordered region spans residues 1-27 (MGALEAERAANNATALETQSSPEDLGQ). Topologically, residues 1-33 (MGALEAERAANNATALETQSSPEDLGQPSPLRK) are cytoplasmic. Over residues 11 to 22 (NNATALETQSSP) the composition is skewed to polar residues. Position 20 is a phosphoserine (serine 20). The chain crosses the membrane as a helical span at residues 34 to 54 (IISVASIAAGVQFGWALQLSL). Residues 55–67 (LTPYIQLLGIPHK) lie on the Extracellular side of the membrane. The chain crosses the membrane as a helical span at residues 68 to 88 (WSSYMWLCGPISGMIVQPIVG). At 89–102 (YHSDRCESRFGRRR) the chain is on the cytoplasmic side. Residues 103-123 (PFIAAGVALVAVSVFLIGFAA) traverse the membrane as a helical segment. The Extracellular segment spans residues 124–140 (DMGHSFGDKLENKVRTR). The chain crosses the membrane as a helical span at residues 141 to 161 (AIIIFLTGFWFLDVANNTLQG). Over 162–179 (PCRAFLADLAAGDAKKTR) the chain is Cytoplasmic. A helical membrane pass occupies residues 180-200 (VANACFSFFMAVGNVLGYAAG). Topologically, residues 201-225 (SYTNLHKMFPFTMTKACDIYCANLK) are extracellular. Residues 226-246 (TCFFLSITLLLIVTFSSLWYV) form a helical membrane-spanning segment. Residues 247–281 (KDKQWSPPQGDKEEKTSSLFFFGEIFGAVRHMKRP) lie on the Cytoplasmic side of the membrane. The chain crosses the membrane as a helical span at residues 282–302 (MVMLLIVTVINWIAWFPFILY). Over 303-333 (DTDWMGREVYGGNSDGDERSKKLYDQGVQAG) the chain is Extracellular. The helical transmembrane segment at 334–354 (ALGLMFNSILLGFVSLGVESI) threads the bilayer. The Cytoplasmic portion of the chain corresponds to 355–363 (GRKMGGAKR). The chain crosses the membrane as a helical span at residues 364 to 384 (LWGCVNFILAIGLAMTVLVTK). Residues 385 to 406 (SAEHHREIAGPLAGPSSGIKAG) lie on the Extracellular side of the membrane. The helical transmembrane segment at 407–427 (VFSLFTVLGIPLAITYSIPFA) threads the bilayer. Topologically, residues 428–440 (LASIFSTNSGAGQ) are cytoplasmic. Residues 441–461 (GLSLGVLNIAICIPQMIVSFS) form a helical membrane-spanning segment. Residues 462–473 (SGPLDAQFGGGN) lie on the Extracellular side of the membrane. A helical membrane pass occupies residues 474–494 (LPSFVVGAIAAAVSGVLALTV). The Cytoplasmic portion of the chain corresponds to 495 to 512 (LPSPPPDAPAMSGAMGFH).

The protein belongs to the glycoside-pentoside-hexuronide (GPH) cation symporter transporter (TC 2.A.2.4) family. In terms of tissue distribution, widely expressed. Expressed in the endosperm and on the epidermis of the outer surface of the cotyledons of torpedo-stage or older embryos.

It localises to the cell membrane. The catalysed reaction is sucrose(out) + H(+)(out) = sucrose(in) + H(+)(in). It participates in glycan biosynthesis; sucrose metabolism. Inhibited by protonophores (e.g. carbonyl cyanide m-chlorophenyl-hydrazone (CCCP)) and SH group inhibitors (e.g. p-chloromercuribenzene sulphonic acid (PCMBS)). Functionally, responsible in a heterologous system for the transport of sucrose into the cell, with the concomitant uptake of protons (symport system). Can also transport biotin, and probably maltose at a lesser rate. In planta, the role of SUC5 for the transport of sucrose seems to be negligible. Plays a role in the nutrition of the filial tissues during early seed development and is probably involved in the import of biotin into the endosperm and the embryo epidermis. In Arabidopsis thaliana (Mouse-ear cress), this protein is Sucrose transport protein SUC5.